The chain runs to 589 residues: Protein FAM117B (589 aa).

The tract at residues 1–310 is disordered; the sequence is MSQRVRRNGS…RDKERQSPFH (310 aa). Position 10 is a phosphoserine (Ser-10). Gly residues predominate over residues 16–29; that stretch reads SLGGGAVATAGGPG. The segment covering 45–56 has biased composition (low complexity); sequence QQQQQQHGSPTR. A compositionally biased stretch (gly residues) spans 57–85; that stretch reads SGGGGGGNNNGGCCGGASGPAGGGGGGGP. The residue at position 106 (Ser-106) is a Phosphoserine. A compositionally biased stretch (low complexity) spans 108–136; the sequence is TVATQTGASATSTRGTSPTRSAAPGARGS. Residues 137-146 are compositionally biased toward pro residues; it reads PPRPPPPPPL. Low complexity-rich tracts occupy residues 147–158 and 207–220; these read LGTVSSPSSSPT and PSSS…RTSS. Residues Ser-210, Ser-219, Ser-220, and Ser-273 each carry the phosphoserine modification. The span at 292–302 shows a compositional bias: basic residues; that stretch reads RSKHSSRHHRD. A phosphoserine mark is found at Ser-345 and Ser-391. Disordered regions lie at residues 370-464 and 556-589; these read QDIP…NNSY and STNT…EAEG. Positions 384-397 are enriched in polar residues; sequence QRSSSTRSIDTQTP. A compositionally biased stretch (low complexity) spans 404–417; it reads SNNSSRSQSVSPTS. Phosphoserine occurs at positions 449 and 457.

This chain is Protein FAM117B (FAM117B), found in Homo sapiens (Human).